Reading from the N-terminus, the 121-residue chain is Non-specific lipid-transfer protein 3 (121 aa).

A signal peptide spans 1–28 (MAGARRTMALVALVAVVAAAVVAERASA). Intrachain disulfides connect C32-C80, C42-C57, C58-C103, and C78-C117.

This sequence belongs to the plant LTP family.

Plant non-specific lipid-transfer proteins transfer phospholipids as well as galactolipids across membranes. May play a role in wax or cutin deposition in the cell walls of expanding epidermal cells and certain secretory tissues. May possess an antifungal activity and protect the plant against pathogens. The chain is Non-specific lipid-transfer protein 3 (LTP110-A) from Oryza sativa subsp. indica (Rice).